A 227-amino-acid chain; its full sequence is Orotidine 5'-phosphate decarboxylase (227 aa).

Substrate is bound by residues D8, K30, 57 to 66 (DLKFHDIPNT), T116, R177, Q186, G206, and R207. Residue K59 is the Proton donor of the active site.

This sequence belongs to the OMP decarboxylase family. Type 1 subfamily. Homodimer.

The catalysed reaction is orotidine 5'-phosphate + H(+) = UMP + CO2. It participates in pyrimidine metabolism; UMP biosynthesis via de novo pathway; UMP from orotate: step 2/2. Its function is as follows. Catalyzes the decarboxylation of orotidine 5'-monophosphate (OMP) to uridine 5'-monophosphate (UMP). This is Orotidine 5'-phosphate decarboxylase from Acinetobacter baylyi (strain ATCC 33305 / BD413 / ADP1).